A 389-amino-acid chain; its full sequence is Phospho-N-acetylmuramoyl-pentapeptide-transferase (389 aa).

The next 10 membrane-spanning stretches (helical) occupy residues 25 to 45 (RAVM…PWVI), 73 to 93 (TMGG…WADL), 97 to 117 (FIWI…VDDY), 134 to 154 (FFWQ…SVSE), 190 to 210 (VSYP…IVGS), 222 to 242 (GLVI…AYVM), 258 to 278 (GAGE…AFLW), 286 to 306 (VFMG…IAVI), 311 to 331 (IVLF…MLQV), and 366 to 386 (QVVV…LSSL).

This sequence belongs to the glycosyltransferase 4 family. MraY subfamily. The cofactor is Mg(2+).

Its subcellular location is the cell inner membrane. The catalysed reaction is UDP-N-acetyl-alpha-D-muramoyl-L-alanyl-gamma-D-glutamyl-meso-2,6-diaminopimeloyl-D-alanyl-D-alanine + di-trans,octa-cis-undecaprenyl phosphate = di-trans,octa-cis-undecaprenyl diphospho-N-acetyl-alpha-D-muramoyl-L-alanyl-D-glutamyl-meso-2,6-diaminopimeloyl-D-alanyl-D-alanine + UMP. It participates in cell wall biogenesis; peptidoglycan biosynthesis. Its function is as follows. Catalyzes the initial step of the lipid cycle reactions in the biosynthesis of the cell wall peptidoglycan: transfers peptidoglycan precursor phospho-MurNAc-pentapeptide from UDP-MurNAc-pentapeptide onto the lipid carrier undecaprenyl phosphate, yielding undecaprenyl-pyrophosphoryl-MurNAc-pentapeptide, known as lipid I. The sequence is that of Phospho-N-acetylmuramoyl-pentapeptide-transferase from Polynucleobacter necessarius subsp. necessarius (strain STIR1).